Consider the following 215-residue polypeptide: Ribonuclease HII (215 aa).

An RNase H type-2 domain is found at 19-213 (QTVAGVDEVG…SLRQPSQQID (195 aa)). Residues Asp-25, Glu-26, and Asp-121 each coordinate a divalent metal cation.

This sequence belongs to the RNase HII family. The cofactor is Mn(2+). It depends on Mg(2+) as a cofactor.

Its subcellular location is the cytoplasm. It catalyses the reaction Endonucleolytic cleavage to 5'-phosphomonoester.. Endonuclease that specifically degrades the RNA of RNA-DNA hybrids. The protein is Ribonuclease HII of Synechococcus elongatus (strain ATCC 33912 / PCC 7942 / FACHB-805) (Anacystis nidulans R2).